A 452-amino-acid polypeptide reads, in one-letter code: Bifunctional protein GlmU (452 aa).

Residues 1-225 are pyrophosphorylase; the sequence is MDVVILAAGL…ENELIGINTR (225 aa). UDP-N-acetyl-alpha-D-glucosamine-binding positions include 6-9, lysine 20, glutamine 71, and 76-77; these read LAAG and GT. Mg(2+) is bound at residue aspartate 99. Glycine 136, glutamate 151, asparagine 166, and asparagine 223 together coordinate UDP-N-acetyl-alpha-D-glucosamine. Asparagine 223 contacts Mg(2+). A linker region spans residues 226–246; the sequence is AELSLAMRYLRDRIVKGWMEK. The segment at 247 to 452 is N-acetyltransferase; the sequence is GITFYDPALV…LGWAKKKRKQ (206 aa). The UDP-N-acetyl-alpha-D-glucosamine site is built by arginine 329 and lysine 347. Residue histidine 359 is the Proton acceptor of the active site. UDP-N-acetyl-alpha-D-glucosamine is bound by residues tyrosine 362 and asparagine 373. Residues alanine 376, 382–383, serine 401, alanine 419, and arginine 436 contribute to the acetyl-CoA site; that span reads NY.

In the N-terminal section; belongs to the N-acetylglucosamine-1-phosphate uridyltransferase family. It in the C-terminal section; belongs to the transferase hexapeptide repeat family. In terms of assembly, homotrimer. Requires Mg(2+) as cofactor.

The protein resides in the cytoplasm. It catalyses the reaction alpha-D-glucosamine 1-phosphate + acetyl-CoA = N-acetyl-alpha-D-glucosamine 1-phosphate + CoA + H(+). The catalysed reaction is N-acetyl-alpha-D-glucosamine 1-phosphate + UTP + H(+) = UDP-N-acetyl-alpha-D-glucosamine + diphosphate. It participates in nucleotide-sugar biosynthesis; UDP-N-acetyl-alpha-D-glucosamine biosynthesis; N-acetyl-alpha-D-glucosamine 1-phosphate from alpha-D-glucosamine 6-phosphate (route II): step 2/2. The protein operates within nucleotide-sugar biosynthesis; UDP-N-acetyl-alpha-D-glucosamine biosynthesis; UDP-N-acetyl-alpha-D-glucosamine from N-acetyl-alpha-D-glucosamine 1-phosphate: step 1/1. It functions in the pathway bacterial outer membrane biogenesis; LPS lipid A biosynthesis. In terms of biological role, catalyzes the last two sequential reactions in the de novo biosynthetic pathway for UDP-N-acetylglucosamine (UDP-GlcNAc). The C-terminal domain catalyzes the transfer of acetyl group from acetyl coenzyme A to glucosamine-1-phosphate (GlcN-1-P) to produce N-acetylglucosamine-1-phosphate (GlcNAc-1-P), which is converted into UDP-GlcNAc by the transfer of uridine 5-monophosphate (from uridine 5-triphosphate), a reaction catalyzed by the N-terminal domain. The chain is Bifunctional protein GlmU from Thermodesulfovibrio yellowstonii (strain ATCC 51303 / DSM 11347 / YP87).